Here is a 250-residue protein sequence, read N- to C-terminus: MGRGRVQLKRIENKINRQVTFSKRRSGLLKKAHEISVLCDAEVGLIVFSTKGKLFEYATDSCMERLLERYERYSFAEKQLVPTDHTSPGSWTLENAKLKARLEVLQRNEKLYVGEDLESLNMKELQNLEHQLASALKHIRSRKNQLMHESISVLQKQDRALQEQNNQLSKKVKEREKEVEQQNQWDQQNHEINSSTFVLPQQLDSPHLGEASQNTNVVDNGEVEGGNSSQXQGAANNTVMPQWMVRHLNG.

Residues 3–57 (RGRVQLKRIENKINRQVTFSKRRSGLLKKAHEISVLCDAEVGLIVFSTKGKLFEY) enclose the MADS-box domain. The region spanning 88–178 (PGSWTLENAK…SKKVKEREKE (91 aa)) is the K-box domain. 2 disordered regions span residues 162-191 (QEQNNQLSKKVKEREKEVEQQNQWDQQNHE) and 206-241 (PHLGEASQNTNVVDNGEVEGGNSSQXQGAANNTVMP). Residues 171 to 180 (KVKEREKEVE) show a composition bias toward basic and acidic residues. Polar residues-rich tracts occupy residues 181–191 (QQNQWDQQNHE) and 226–240 (GNSSQXQGAANNTVM).

The protein resides in the nucleus. Functionally, probable transcription factor. The protein is Agamous-like MADS-box protein AGL8 homolog (SCM1) of Solanum commersonii (Commerson's wild potato).